A 103-amino-acid polypeptide reads, in one-letter code: Truncated secreted TNF-receptor-like protein A53R (103 aa).

The stretch at 36-73 (SCDKGEYLDKRHNQCCNRCPPGEFAKVRCNGNDNTKCE) is one TNFR-Cys 1 repeat. Disulfide bonds link Cys37–Cys50, Cys51–Cys64, and Cys54–Cys72. One copy of the TNFR-Cys 2; truncated repeat lies at 74–103 (RCPPHTYTTIPIILMDVINVENAQPDHLIR).

The protein belongs to the poxviridae A53R protein family.

The polypeptide is Truncated secreted TNF-receptor-like protein A53R (Vaccinia virus (strain Western Reserve) (VACV)).